A 274-amino-acid polypeptide reads, in one-letter code: Cytochrome b-c1 complex subunit Rieske, mitochondrial (274 aa).

The Mitochondrial matrix portion of the chain corresponds to 79–110 (SHTDVKVPDFSDYRRAEVLDSTKSSKESSEAR). A helical membrane pass occupies residues 111–137 (KGFSYLVTATTTVGVAYAAKNVVSQFV). Residues 138–274 (SSMSASADVL…FTSDDVVVVG (137 aa)) lie on the Mitochondrial intermembrane side of the membrane. The region spanning 187 to 272 (EAAVEVSQLR…YEFTSDDVVV (86 aa)) is the Rieske domain. [2Fe-2S] cluster is bound by residues C217, H219, C236, H239, and S241. A disulfide bond links C222 and C238.

This sequence belongs to the Rieske iron-sulfur protein family. As to quaternary structure, component of the ubiquinol-cytochrome c oxidoreductase (cytochrome b-c1 complex, complex III, CIII), a multisubunit enzyme composed of 11 subunits. The complex is composed of 3 respiratory subunits cytochrome b, cytochrome c1 and Rieske protein UQCRFS1, 2 core protein subunits UQCRC1/QCR1 and UQCRC2/QCR2, and 6 low-molecular weight protein subunits UQCRH/QCR6, UQCRB/QCR7, UQCRQ/QCR8, UQCR10/QCR9, UQCR11/QCR10 and subunit 9, the cleavage product of Rieske protein UQCRFS1. The complex exists as an obligatory dimer and forms supercomplexes (SCs) in the inner mitochondrial membrane with NADH-ubiquinone oxidoreductase (complex I, CI) and cytochrome c oxidase (complex IV, CIV), resulting in different assemblies (supercomplex SCI(1)III(2)IV(1) and megacomplex MCI(2)III(2)IV(2)). Incorporation of the Rieske protein UQCRFS1 is the penultimate step in complex III assembly. Interacts with TTC19, which is involved in the clearance of UQCRFS1 fragments. In terms of assembly, component of the ubiquinol-cytochrome c oxidoreductase (cytochrome b-c1 complex, complex III, CIII). Subunit 9 corresponds to the mitochondrial targeting sequence (MTS) of Rieske protein UQCRFS1. It is retained after processing and incorporated inside complex III, where it remains bound to the complex and localizes between the 2 core subunits UQCRC1/QCR1 and UQCRC2/QCR2. Requires [2Fe-2S] cluster as cofactor. Post-translationally, proteolytic processing is necessary for the correct insertion of UQCRFS1 in the complex III dimer. Several fragments are generated during UQCRFS1 insertion, most probably due to the endogenous matrix-processing peptidase (MPP) activity of the 2 core protein subunits UQCRC1/QCR1 and UQCRC2/QCR2, which are homologous to the 2 mitochondrial-processing peptidase (MPP) subunits beta-MPP and alpha-MPP respectively. The action of the protease is also necessary for the clearance of the UQCRFS1 fragments.

Its subcellular location is the mitochondrion inner membrane. It carries out the reaction a quinol + 2 Fe(III)-[cytochrome c](out) = a quinone + 2 Fe(II)-[cytochrome c](out) + 2 H(+)(out). Its function is as follows. Component of the ubiquinol-cytochrome c oxidoreductase, a multisubunit transmembrane complex that is part of the mitochondrial electron transport chain which drives oxidative phosphorylation. The respiratory chain contains 3 multisubunit complexes succinate dehydrogenase (complex II, CII), ubiquinol-cytochrome c oxidoreductase (cytochrome b-c1 complex, complex III, CIII) and cytochrome c oxidase (complex IV, CIV), that cooperate to transfer electrons derived from NADH and succinate to molecular oxygen, creating an electrochemical gradient over the inner membrane that drives transmembrane transport and the ATP synthase. The cytochrome b-c1 complex catalyzes electron transfer from ubiquinol to cytochrome c, linking this redox reaction to translocation of protons across the mitochondrial inner membrane, with protons being carried across the membrane as hydrogens on the quinol. In the process called Q cycle, 2 protons are consumed from the matrix, 4 protons are released into the intermembrane space and 2 electrons are passed to cytochrome c. The Rieske protein is a catalytic core subunit containing a [2Fe-2S] iron-sulfur cluster. It cycles between 2 conformational states during catalysis to transfer electrons from the quinol bound in the Q(0) site in cytochrome b to cytochrome c1. Incorporation of UQCRFS1 is the penultimate step in complex III assembly. Component of the ubiquinol-cytochrome c oxidoreductase (cytochrome b-c1 complex, complex III, CIII). UQCRFS1 undergoes proteolytic processing once it is incorporated in the complex III dimer. One of the fragments, called subunit 9, corresponds to its mitochondrial targeting sequence (MTS). The proteolytic processing is necessary for the correct insertion of UQCRFS1 in the complex III dimer, but the persistence of UQCRFS1-derived fragments may prevent newly imported UQCRFS1 to be processed and assembled into complex III and is detrimental for the complex III structure and function. The polypeptide is Cytochrome b-c1 complex subunit Rieske, mitochondrial (Mus musculus (Mouse)).